The chain runs to 71 residues: Protein SlyX homolog (71 aa).

Residues 52–71 form a disordered region; it reads RLDQAESSAGAPANERPPHY.

The protein belongs to the SlyX family.

The chain is Protein SlyX homolog from Rhodopseudomonas palustris (strain ATCC BAA-98 / CGA009).